We begin with the raw amino-acid sequence, 519 residues long: MDAVLEPFPADRLFPGSSFLDLGDLNESDFLNNAHFPEHLDHFTENMEDFSNDLFSSFFDDPVLDEKSPLLDMELDSPTPGIQAEHSYSLSGDSAPQSPLVPIKMEDTTQDAEHGAWALGHKLCSIMVKQEQSPELPVDPLAAPSAMAAAAAMATTPLLGLSPLSRLPIPHQAPGEMTQLPVIKAEPLEVNQFLKVTPEDLVQMPPTPPSSHGSDSDGSQSPRSLPPSSPVRPMARSSTAISTSPLLTAPHKLQGTSGPLLLTEEEKRTLIAEGYPIPTKLPLTKAEEKALKRVRRKIKNKISAQESRRKKKEYVECLEKKVETFTSENNELWKKVETLENANRTLLQQLQKLQTLVTNKISRPYKMAATQTGTCLMVAALCFVLVLGSLVPCLPEFSSGSQTVKEDPLAADGVYTASQMPSRSLLFYDDGAGLWEDGRSTLLPMEPPDGWEINPGGPAEQRPRDHLQHDHLDSTHETTKYLSEAWPKDGGNGTSPDFSHSKEWFHDRDLGPNTTIKLS.

The tract at residues 1 to 60 (MDAVLEPFPADRLFPGSSFLDLGDLNESDFLNNAHFPEHLDHFTENMEDFSNDLFSSFFD) is required for transcriptional activation. Topologically, residues 1–374 (MDAVLEPFPA…YKMAATQTGT (374 aa)) are cytoplasmic. The segment at 71-98 (LDMELDSPTPGIQAEHSYSLSGDSAPQS) is disordered. Residues 86–97 (HSYSLSGDSAPQ) are compositionally biased toward polar residues. A Glycyl lysine isopeptide (Lys-Gly) (interchain with G-Cter in SUMO2) cross-link involves residue Lys184. Residues 200-259 (DLVQMPPTPPSSHGSDSDGSQSPRSLPPSSPVRPMARSSTAISTSPLLTAPHKLQGTSGP) form a disordered region. Residues 210–223 (SSHGSDSDGSQSPR) are compositionally biased toward low complexity. Polar residues predominate over residues 236-246 (RSSTAISTSPL). The region spanning 290–353 (ALKRVRRKIK…RTLLQQLQKL (64 aa)) is the bZIP domain. The tract at residues 292-321 (KRVRRKIKNKISAQESRRKKKEYVECLEKK) is basic motif. The leucine-zipper stretch occupies residues 332 to 353 (LWKKVETLENANRTLLQQLQKL). A helical; Signal-anchor for type II membrane protein membrane pass occupies residues 375–395 (CLMVAALCFVLVLGSLVPCLP). Residues 392–395 (PCLP) carry the MBTPS2 recognition motif. The Lumenal portion of the chain corresponds to 396–519 (EFSSGSQTVK…LGPNTTIKLS (124 aa)). The MBTPS1 recognition motif lies at 423-426 (RSLL). The segment at 484-519 (EAWPKDGGNGTSPDFSHSKEWFHDRDLGPNTTIKLS) is disordered. Residue Asn492 is glycosylated (N-linked (GlcNAc...) asparagine). A compositionally biased stretch (basic and acidic residues) spans 499–510 (SHSKEWFHDRDL). Residue Asn513 is glycosylated (N-linked (GlcNAc...) asparagine).

This sequence belongs to the bZIP family. ATF subfamily. Interacts with SMAD4, the interaction takes place upon TGFB1 induction and SMAD4 acts as a CREB3L1 coactivator to induce the expression of genes involved in assembly of collagen extracellular matrix. In terms of processing, upon ER stress or DNA damage, translocated to the Golgi apparatus, where it is processed by regulated intramembrane proteolysis (RIP) to release the cytosol-facing N-terminal transcription factor domain. The cleavage is performed sequentially by site-1 and site-2 proteases (S1P/MBTPS1 and S2P/MBTPS2). RIP is induced by TGFB1 and ceramide. N-glycosylated. Post-translationally, ubiquitinated by HRD1/SYVN1; undergoes 'Lys-48'-linked ubiquitination, followed by rapid proteasomal degradation under normal conditions. Upon ER stress, SYVN1 E3 ubiquitin-protein ligase dissociates from its substrate, ubiquitination does not occur and CREB3L1 is stabilized. In terms of tissue distribution, expressed in several tissues, with highest levels in pancreas and prostate. Expressed at relatively lower levels in brain.

The protein localises to the endoplasmic reticulum membrane. It is found in the nucleus. Precursor of the transcription factor form (Processed cyclic AMP-responsive element-binding protein 3-like protein 1), which is embedded in the endoplasmic reticulum membrane with N-terminal DNA-binding and transcription activation domains oriented toward the cytosolic face of the membrane. In response to ER stress or DNA damage, transported to the Golgi, where it is cleaved in a site-specific manner by resident proteases S1P/MBTPS1 and S2P/MBTPS2. The released N-terminal cytosolic domain is translocated to the nucleus where it activates transcription of specific target genes involved in the cell-cycle progression inhibition. Functionally, transcription factor involved in cell type specific DNA damage and unfolded protein response (UPR). Binds the DNA consensus sequence 5'-GTGXGCXGC-3'. Plays a critical role in bone formation through the transcription of COL1A1, and possibly COL1A2, and the secretion of bone matrix proteins. Directly binds to the UPR element (UPRE)-like sequence in an osteoblast-specific COL1A1 promoter region and induces its transcription. Does not regulate COL1A1 in other tissues, such as skin. Required to protect astrocytes from ER stress-induced cell death. In astrocytes, binds to the cAMP response element (CRE) of the BiP/HSPA5 promoter and participate in its transcriptional activation. In astrocytes and osteoblasts, upon DNA damage, inhibits cell-cycle progression after G2/M phase by binding to promoters and activating transcription of genes encoding cell-cycle inhibitors, such as p21/CDKN1A. Required for TGFB1 to activate genes involved in the assembly of collagen extracellular matrix. Its function is as follows. (Microbial infection) May play a role in limiting virus spread by inhibiting proliferation of virus-infected cells. Upon infection with diverse DNA and RNA viruses, inhibits cell-cycle progression by binding to promoters and activating transcription of genes encoding cell-cycle inhibitors, such as p21/CDKN1A. In Homo sapiens (Human), this protein is Cyclic AMP-responsive element-binding protein 3-like protein 1.